The chain runs to 215 residues: ATP-dependent Clp protease proteolytic subunit (215 aa).

Residue serine 111 is the Nucleophile of the active site. Histidine 136 is an active-site residue.

Belongs to the peptidase S14 family. Fourteen ClpP subunits assemble into 2 heptameric rings which stack back to back to give a disk-like structure with a central cavity, resembling the structure of eukaryotic proteasomes.

The protein resides in the cytoplasm. The enzyme catalyses Hydrolysis of proteins to small peptides in the presence of ATP and magnesium. alpha-casein is the usual test substrate. In the absence of ATP, only oligopeptides shorter than five residues are hydrolyzed (such as succinyl-Leu-Tyr-|-NHMec, and Leu-Tyr-Leu-|-Tyr-Trp, in which cleavage of the -Tyr-|-Leu- and -Tyr-|-Trp bonds also occurs).. In terms of biological role, cleaves peptides in various proteins in a process that requires ATP hydrolysis. Has a chymotrypsin-like activity. Plays a major role in the degradation of misfolded proteins. This Hamiltonella defensa subsp. Acyrthosiphon pisum (strain 5AT) protein is ATP-dependent Clp protease proteolytic subunit.